The primary structure comprises 469 residues: Ribosomal protein uS12 methylthiotransferase RimO (469 aa).

The 111-residue stretch at 34–144 (NKIGFVSLGC…VLEHVHQFAP (111 aa)) folds into the MTTase N-terminal domain. Residues Cys-43, Cys-79, Cys-108, Cys-176, Cys-180, and Cys-183 each coordinate [4Fe-4S] cluster. The Radical SAM core domain maps to 162 to 399 (LTPKHYAYLK…MLVQQEISAA (238 aa)). One can recognise a TRAM domain in the interval 402 to 468 (QKRIGSTMKV…EYDLWGSLVR (67 aa)).

The protein belongs to the methylthiotransferase family. RimO subfamily. Requires [4Fe-4S] cluster as cofactor.

It localises to the cytoplasm. It carries out the reaction L-aspartate(89)-[ribosomal protein uS12]-hydrogen + (sulfur carrier)-SH + AH2 + 2 S-adenosyl-L-methionine = 3-methylsulfanyl-L-aspartate(89)-[ribosomal protein uS12]-hydrogen + (sulfur carrier)-H + 5'-deoxyadenosine + L-methionine + A + S-adenosyl-L-homocysteine + 2 H(+). In terms of biological role, catalyzes the methylthiolation of an aspartic acid residue of ribosomal protein uS12. In Vibrio vulnificus (strain YJ016), this protein is Ribosomal protein uS12 methylthiotransferase RimO.